Reading from the N-terminus, the 888-residue chain is Glutamate receptor 3 (888 aa).

The signal sequence occupies residues 1–22; it reads MGQSVLRAVFFLVLGLLGHSHG. Over 23-546 the chain is Extracellular; sequence GFPNTISIGG…GVFSFLDPLA (524 aa). N-linked (GlcNAc...) asparagine glycans are attached at residues N57, N260, N374, N409, and N416. A disulfide bridge connects residues C85 and C334. Residues P502, T504, and R509 each coordinate L-glutamate. A helical membrane pass occupies residues 547-567; sequence YEIWMCIVFAYIGVSVVLFLV. Topologically, residues 568 to 596 are cytoplasmic; it reads SRFSPYEWHLEDNNEEPRDPQSPPDPPNE. Residues 597 to 612 constitute an intramembrane region (helical; Pore-forming); that stretch reads FGIFNSLWFSLGAFMQ. An intramembrane segment occupies 613–615; the sequence is QGC. C615 carries the S-palmitoyl cysteine lipid modification. Topologically, residues 616–621 are cytoplasmic; sequence DISPRS. A helical transmembrane segment spans residues 622–642; the sequence is LSGRIVGGVWWFFTLIIISSY. The Extracellular portion of the chain corresponds to 643–817; the sequence is TANLAAFLTV…DKTSALSLSN (175 aa). The L-glutamate site is built by S680, T681, and E731. C744 and C799 are disulfide-bonded. The helical transmembrane segment at 818-838 threads the bilayer; that stretch reads VAGVFYILVGGLGLAMMVALI. At 839–888 the chain is on the cytoplasmic side; that stretch reads EFCYKSRAESKRMKLTKNTQNFKPAPATNTQNYATYREGYNVYGTESVKI. C841 carries S-palmitoyl cysteine lipidation. Residues Y871 and Y881 each carry the phosphotyrosine modification.

It belongs to the glutamate-gated ion channel (TC 1.A.10.1) family. GRIA3 subfamily. Homotetramer or heterotetramer of pore-forming glutamate receptor subunits. Tetramers may be formed by the dimerization of dimers. Interacts with PICK1, GRIP1 and GRIP2. Found in a complex with GRIA1, GRIA2, GRIA4, CNIH2, CNIH3, CACNG2, CACNG3, CACNG4, CACNG5, CACNG7 and CACNG8. Interacts with CACNG5. Found in a complex with GRIA1, GRIA2, GRIA4, DLG4, CACNG8 and CNIH2.

The protein resides in the cell membrane. Its subcellular location is the postsynaptic cell membrane. The protein localises to the postsynaptic density membrane. It carries out the reaction Ca(2+)(in) = Ca(2+)(out). In terms of biological role, ionotropic glutamate receptor that functions as a ligand-gated cation channel, gated by L-glutamate and glutamatergic agonists such as alpha-amino-3-hydroxy-5-methyl-4-isoxazolepropionic acid (AMPA), quisqualic acid, and kainic acid. L-glutamate acts as an excitatory neurotransmitter at many synapses in the central nervous system and plays an important role in fast excitatory synaptic transmission by inducing long-term potentiation. Binding of the excitatory neurotransmitter L-glutamate induces a conformation change, leading to the opening of the cation channel, and thereby converts the chemical signal to an electrical impulse upon entry of calcium. The receptor then desensitizes rapidly and enters a transient inactive state, characterized by the presence of bound agonist. In the presence of CACNG8, shows resensitization which is characterized by a delayed accumulation of current flux upon continued application of glutamate. In Mus musculus (Mouse), this protein is Glutamate receptor 3.